The primary structure comprises 293 residues: Ribonuclease HIII (293 aa).

Residues 78-293 form the RNase H type-2 domain; it reads LPLIGTDEVG…TEKAKKRLER (216 aa). The a divalent metal cation site is built by Asp-84, Glu-85, and Asp-187.

This sequence belongs to the RNase HII family. RnhC subfamily. The cofactor is Mn(2+). Requires Mg(2+) as cofactor.

The protein resides in the cytoplasm. It carries out the reaction Endonucleolytic cleavage to 5'-phosphomonoester.. Its function is as follows. Endonuclease that specifically degrades the RNA of RNA-DNA hybrids. The protein is Ribonuclease HIII of Streptococcus pneumoniae (strain Taiwan19F-14).